Reading from the N-terminus, the 209-residue chain is Uridine kinase (209 aa).

16 to 23 (GGSGSGKT) contacts ATP.

Belongs to the uridine kinase family.

The protein resides in the cytoplasm. The catalysed reaction is uridine + ATP = UMP + ADP + H(+). It carries out the reaction cytidine + ATP = CMP + ADP + H(+). It participates in pyrimidine metabolism; CTP biosynthesis via salvage pathway; CTP from cytidine: step 1/3. It functions in the pathway pyrimidine metabolism; UMP biosynthesis via salvage pathway; UMP from uridine: step 1/1. This chain is Uridine kinase, found in Lactiplantibacillus plantarum (strain ATCC BAA-793 / NCIMB 8826 / WCFS1) (Lactobacillus plantarum).